The chain runs to 404 residues: Probable oxalate decarboxylase ARB_04859 (404 aa).

A signal peptide spans 1-17 (MKYSAVLVAALAAIADA). The Cupin type-1 1 domain occupies 74–215 (FSLSKTRMLY…NFGVPPSTFD (142 aa)). Residues H117, H119, E123, and H162 each contribute to the Mn(2+) site. Residues N226 and N244 are each glycosylated (N-linked (GlcNAc...) asparagine). Positions 249-393 (FHISNAPEIQ…AINVPIEVIE (145 aa)) constitute a Cupin type-1 2 domain. Residues H296, H298, E303, and H342 each coordinate Mn(2+). N-linked (GlcNAc...) asparagine glycosylation is present at N346. Residue E357 is the Proton donor of the active site.

It depends on Mn(2+) as a cofactor.

It localises to the secreted. It catalyses the reaction oxalate + H(+) = formate + CO2. Its function is as follows. Converts oxalate to formate and CO(2) in an O(2)-dependent reaction. Can also catalyze minor side reactions: oxalate oxidation to produce H(2)O(2), and oxalate-dependent, H(2)O(2)-independent dye oxidations. This Arthroderma benhamiae (strain ATCC MYA-4681 / CBS 112371) (Trichophyton mentagrophytes) protein is Probable oxalate decarboxylase ARB_04859.